Here is a 540-residue protein sequence, read N- to C-terminus: Phosphoenolpyruvate carboxykinase (ATP) (540 aa).

Arg-65 is a binding site for substrate. At Lys-87 the chain carries N6-acetyllysine. Positions 207 and 213 each coordinate substrate. ATP contacts are provided by residues Lys-213, His-232, and 248–256 (GLSGTGKTT). Lys-213 and His-232 together coordinate Mn(2+). A Mn(2+)-binding site is contributed by Asp-269. Residues Glu-297, Arg-333, 449 to 450 (RI), and Thr-455 contribute to the ATP site. Arg-333 contacts substrate. At Lys-523 the chain carries N6-acetyllysine.

It belongs to the phosphoenolpyruvate carboxykinase (ATP) family. In terms of assembly, monomer. It depends on Mn(2+) as a cofactor.

It localises to the cytoplasm. The catalysed reaction is oxaloacetate + ATP = phosphoenolpyruvate + ADP + CO2. It functions in the pathway carbohydrate biosynthesis; gluconeogenesis. Its function is as follows. Involved in the gluconeogenesis. Catalyzes the conversion of oxaloacetate (OAA) to phosphoenolpyruvate (PEP) through direct phosphoryl transfer between the nucleoside triphosphate and OAA. This Shigella flexneri protein is Phosphoenolpyruvate carboxykinase (ATP).